The primary structure comprises 721 residues: Polyribonucleotide nucleotidyltransferase (721 aa).

Residues Asp495 and Asp501 each contribute to the Mg(2+) site. Residues 562-621 (PRLLSFRIDPELIGTVIGPGGRTIKGITERTNTKIDIEDSGIVTIASHDGAAADEAQKII) enclose the KH domain. The 69-residue stretch at 631–699 (GEVFSGSITR…NRGRINLTLR (69 aa)) folds into the S1 motif domain. The disordered stretch occupies residues 698 to 721 (LRGVPQSGDGAGEEPQPTPVAPLS).

The protein belongs to the polyribonucleotide nucleotidyltransferase family. The cofactor is Mg(2+).

The protein localises to the cytoplasm. It catalyses the reaction RNA(n+1) + phosphate = RNA(n) + a ribonucleoside 5'-diphosphate. Involved in mRNA degradation. Catalyzes the phosphorolysis of single-stranded polyribonucleotides processively in the 3'- to 5'-direction. This Parasynechococcus marenigrum (strain WH8102) protein is Polyribonucleotide nucleotidyltransferase.